The following is a 294-amino-acid chain: Acetyl-coenzyme A carboxylase carboxyl transferase subunit beta (294 aa).

The CoA carboxyltransferase N-terminal domain occupies 27–294 (LWHKCPSCDA…PSPVALPVTA (268 aa)). Cys-31, Cys-34, Cys-50, and Cys-53 together coordinate Zn(2+). A C4-type zinc finger spans residues 31–53 (CPSCDAVLYRPELEKTLDVCPKC).

It belongs to the AccD/PCCB family. As to quaternary structure, acetyl-CoA carboxylase is a heterohexamer composed of biotin carboxyl carrier protein (AccB), biotin carboxylase (AccC) and two subunits each of ACCase subunit alpha (AccA) and ACCase subunit beta (AccD). Zn(2+) is required as a cofactor.

The protein resides in the cytoplasm. It carries out the reaction N(6)-carboxybiotinyl-L-lysyl-[protein] + acetyl-CoA = N(6)-biotinyl-L-lysyl-[protein] + malonyl-CoA. Its pathway is lipid metabolism; malonyl-CoA biosynthesis; malonyl-CoA from acetyl-CoA: step 1/1. Functionally, component of the acetyl coenzyme A carboxylase (ACC) complex. Biotin carboxylase (BC) catalyzes the carboxylation of biotin on its carrier protein (BCCP) and then the CO(2) group is transferred by the transcarboxylase to acetyl-CoA to form malonyl-CoA. The protein is Acetyl-coenzyme A carboxylase carboxyl transferase subunit beta of Ectopseudomonas mendocina (strain ymp) (Pseudomonas mendocina).